Reading from the N-terminus, the 78-residue chain is Delta-conotoxin-like CVIE (78 aa).

Positions 1–22 are cleaved as a signal peptide; that stretch reads MKLTCMMIVAVLFLTAWTFVTA. A propeptide spanning residues 23–49 is cleaved from the precursor; that stretch reads DDSRNGLKNLFPKARHEMKNPEASKLN. Cystine bridges form between Cys-54–Cys-69, Cys-61–Cys-73, and Cys-68–Cys-77. A 4-hydroxyproline modification is found at Pro-65.

This sequence belongs to the conotoxin O1 superfamily. Expressed by the venom duct.

The protein resides in the secreted. Functionally, delta-conotoxins bind to site 6 of voltage-gated sodium channels (Nav) and inhibit the inactivation process. The protein is Delta-conotoxin-like CVIE of Conus catus (Cat cone).